Consider the following 999-residue polypeptide: Signal peptide, CUB and EGF-like domain-containing protein 2 (999 aa).

Positions 1 to 31 are cleaved as a signal peptide; that stretch reads MGVAGRNRPGAAWAVLLLLLLLPPLLLLAGA. Residues 45–85 form the EGF-like 1; calcium-binding domain; sequence DVDECAQGLDDCHADALCQNTPTSYKCSCKPGYQGEGRQCE. Intrachain disulfides connect cysteine 49-cysteine 62, cysteine 56-cysteine 71, cysteine 73-cysteine 84, cysteine 90-cysteine 102, cysteine 98-cysteine 111, and cysteine 113-cysteine 126. The EGF-like 2; calcium-binding domain maps to 86 to 127; it reads DIDECGNELNGGCVHDCLNIPGNYRCTCFDGFMLAHDGHNCL. The EGF-like 3; calcium-binding domain maps to 128-168; sequence DVDECLENNGGCQHTCVNVMGSYECCCKEGFFLSDNQHTCI. 3 EGF-like domains span residues 177–213, 217–252, and 286–321; these read CMNK…QRDC, CNHG…GRSC, and CAVN…GKTC. The 41-residue stretch at 323-363 folds into the EGF-like 7; calcium-binding domain; it reads DIDECQTRNGGCDHFCKNIVGSFDCGCKKGFKLLTDEKSCQ. The 39-residue stretch at 364–402 folds into the EGF-like 8; calcium-binding domain; it reads DVDECSLDRTCDHSCINHPGTFACACNRGYTLYGFTHCG. Intrachain disulfides connect cysteine 368–cysteine 378, cysteine 374–cysteine 387, cysteine 389–cysteine 401, cysteine 407–cysteine 418, cysteine 414–cysteine 427, and cysteine 429–cysteine 442. Residues 403 to 443 enclose the EGF-like 9; calcium-binding domain; sequence DTNECSINNGGCQQVCVNTVGSYECQCHPGYKLHWNKKDCV. Residue asparagine 659 is glycosylated (N-linked (GlcNAc...) asparagine). The cysteines at positions 809 and 835 are disulfide-linked. Residues 809-921 enclose the CUB domain; it reads CGGELGDFTG…RGFQVPYVTY (113 aa). An interaction with the cholesterol-anchor of SHH region spans residues 847-856; the sequence is ILIVVPEIFL. A disulfide bridge links cysteine 862 with cysteine 883.

In terms of assembly, forms homooligomers. Forms heterooligomers with SCUBE1. Forms heterooligomers with SCUBE3. Interacts with SHH via the cholesterol anchor of the dually lipid-modified SHH (ShhNp). Interacts with PTCH1. Interacts with VEGFR2. Post-translationally, N-glycosylated. As to expression, expressed in a broad spectrum of adult tissues.

It is found in the secreted. The protein resides in the cell surface. Lipid-binding protein required for SHH long-range signaling by binding to the dually lipid-modified SHH (ShhNp) and by promoting ShhNp mobilization, solubilization and release from the cell membrane. Acts by enhancing the proteolytic processing (shedding) of the lipid-modified N- and C- terminal of ShhNp at the cell surface. Synergizes with DISP1 to increase SHH secretion. Probable cell surface coreceptor for VEGFR2 involved in VEGFR2-mediated angiogenesis. The sequence is that of Signal peptide, CUB and EGF-like domain-containing protein 2 from Homo sapiens (Human).